Consider the following 520-residue polypeptide: Gamma aminobutyrate transaminase 3, chloroplastic (520 aa).

The N-terminal 44 residues, 1 to 44 (MAKITSLIGSGIVAATNQVGPHVKHIPAVGNLQKQIVSDQIQVR), are a transit peptide targeting the chloroplast. 172–173 (GS) provides a ligand contact to pyridoxal 5'-phosphate. Tyrosine 205 contributes to the substrate binding site. Aspartate 312 is a pyridoxal 5'-phosphate binding site. Lysine 341 provides a ligand contact to substrate. Lysine 341 carries the post-translational modification N6-(pyridoxal phosphate)lysine.

It belongs to the class-III pyridoxal-phosphate-dependent aminotransferase family. As to expression, expressed in leaves, roots, stems, flowers and fruits.

Its subcellular location is the plastid. The protein resides in the chloroplast. The enzyme catalyses 4-aminobutanoate + pyruvate = succinate semialdehyde + L-alanine. It carries out the reaction 4-aminobutanoate + glyoxylate = succinate semialdehyde + glycine. In terms of biological role, transaminase that degrades gamma-amino butyric acid (GABA) and uses pyruvate or glyoxylate as amino-group acceptor. Cannot use beta-alanine, ornithine, acetylornithine, serine, glycine, asparagine, glutamine, glutamate, valine, leucine, isoleucine, methionine, phenylalanine, histidine, lysine, arginine, aspartate, threonine, tyrosine, tryptophan, proline, or cysteine as amino donors. This is Gamma aminobutyrate transaminase 3, chloroplastic (GABA-TP3) from Solanum lycopersicum (Tomato).